A 338-amino-acid polypeptide reads, in one-letter code: Probable tRNA pseudouridine synthase B (338 aa).

The active-site Nucleophile is the aspartate 78. Positions 245–320 (LPKIILRDSA…IAASPIRVLM (76 aa)) constitute a PUA domain.

This sequence belongs to the pseudouridine synthase TruB family. Type 2 subfamily.

It catalyses the reaction uridine(55) in tRNA = pseudouridine(55) in tRNA. Functionally, could be responsible for synthesis of pseudouridine from uracil-55 in the psi GC loop of transfer RNAs. This chain is Probable tRNA pseudouridine synthase B, found in Methanosarcina acetivorans (strain ATCC 35395 / DSM 2834 / JCM 12185 / C2A).